The primary structure comprises 338 residues: Ketol-acid reductoisomerase (NADP(+)) (338 aa).

The region spanning 1–181 is the KARI N-terminal Rossmann domain; sequence MKVYYDKDCD…GGGRTGIIET (181 aa). Residues 24 to 27, R47, S50, T52, and 82 to 85 contribute to the NADP(+) site; these read YGSQ and DEFQ. H107 is an active-site residue. G133 contributes to the NADP(+) binding site. Positions 182-327 constitute a KARI C-terminal knotted domain; sequence TFKDETETDL…EQLRAMMPWI (146 aa). The Mg(2+) site is built by D190, E194, E226, and E230. S251 contributes to the substrate binding site.

It belongs to the ketol-acid reductoisomerase family. Mg(2+) serves as cofactor.

The catalysed reaction is (2R)-2,3-dihydroxy-3-methylbutanoate + NADP(+) = (2S)-2-acetolactate + NADPH + H(+). The enzyme catalyses (2R,3R)-2,3-dihydroxy-3-methylpentanoate + NADP(+) = (S)-2-ethyl-2-hydroxy-3-oxobutanoate + NADPH + H(+). Its pathway is amino-acid biosynthesis; L-isoleucine biosynthesis; L-isoleucine from 2-oxobutanoate: step 2/4. The protein operates within amino-acid biosynthesis; L-valine biosynthesis; L-valine from pyruvate: step 2/4. Its function is as follows. Involved in the biosynthesis of branched-chain amino acids (BCAA). Catalyzes an alkyl-migration followed by a ketol-acid reduction of (S)-2-acetolactate (S2AL) to yield (R)-2,3-dihydroxy-isovalerate. In the isomerase reaction, S2AL is rearranged via a Mg-dependent methyl migration to produce 3-hydroxy-3-methyl-2-ketobutyrate (HMKB). In the reductase reaction, this 2-ketoacid undergoes a metal-dependent reduction by NADPH to yield (R)-2,3-dihydroxy-isovalerate. The chain is Ketol-acid reductoisomerase (NADP(+)) from Ectopseudomonas mendocina (strain ymp) (Pseudomonas mendocina).